We begin with the raw amino-acid sequence, 263 residues long: Chymotrypsinogen B (263 aa).

Positions 1–18 are cleaved as a signal peptide; the sequence is MASLWLLSCFSLVGAAFG. Disulfide bonds link Cys-19-Cys-140, Cys-60-Cys-76, Cys-154-Cys-219, Cys-186-Cys-200, and Cys-209-Cys-238. The Peptidase S1 domain occupies 34–261; sequence IVNGEDAVPG…LIPWVQKILA (228 aa). The active-site Charge relay system is His-75. The residue at position 93 (Ser-93) is a Phosphoserine. The active-site Charge relay system is Asp-120. The Charge relay system role is filled by Ser-213.

Belongs to the peptidase S1 family.

It is found in the secreted. The protein resides in the extracellular space. The enzyme catalyses Preferential cleavage: Tyr-|-Xaa, Trp-|-Xaa, Phe-|-Xaa, Leu-|-Xaa.. This Homo sapiens (Human) protein is Chymotrypsinogen B.